We begin with the raw amino-acid sequence, 393 residues long: NAD(P)H-quinone oxidoreductase subunit H, chloroplastic (393 aa).

Belongs to the complex I 49 kDa subunit family. In terms of assembly, NDH is composed of at least 16 different subunits, 5 of which are encoded in the nucleus.

Its subcellular location is the plastid. It is found in the chloroplast thylakoid membrane. The catalysed reaction is a plastoquinone + NADH + (n+1) H(+)(in) = a plastoquinol + NAD(+) + n H(+)(out). The enzyme catalyses a plastoquinone + NADPH + (n+1) H(+)(in) = a plastoquinol + NADP(+) + n H(+)(out). In terms of biological role, NDH shuttles electrons from NAD(P)H:plastoquinone, via FMN and iron-sulfur (Fe-S) centers, to quinones in the photosynthetic chain and possibly in a chloroplast respiratory chain. The immediate electron acceptor for the enzyme in this species is believed to be plastoquinone. Couples the redox reaction to proton translocation, and thus conserves the redox energy in a proton gradient. The chain is NAD(P)H-quinone oxidoreductase subunit H, chloroplastic from Solanum lycopersicum (Tomato).